A 131-amino-acid polypeptide reads, in one-letter code: Large ribosomal subunit protein bL17 (131 aa).

The protein belongs to the bacterial ribosomal protein bL17 family. In terms of assembly, part of the 50S ribosomal subunit. Contacts protein L32.

In Burkholderia multivorans (strain ATCC 17616 / 249), this protein is Large ribosomal subunit protein bL17.